Here is a 1077-residue protein sequence, read N- to C-terminus: MVPYFEMAAASNFSFLCGASHPQELVERAHALDLSGIGIADRNTLAGVVRAHAQWKDIRKESGFRLFIGCRLSFIDGTPDMVVYPRDRAAYGQLCRLLTEGKHRAAIKGECHLEWADLLFRARQFQIAVFPPDEDEPDFAARLTEIAQAAPGSVWLALTMPHQGQDGRRAERIARFAAQAGVPLIATNDVLYHHPDRRPLQDVLTATRHHTTVFAAGRLLEKNAERHLKPPHEMVRLFRDYPEAIAATADFVAPITFQLDELKYAYPDEPIPPGKTAQQHLYDLVWEGAARHYGADMIPPKVQGLINKELALIARLEYEPYFLTVYDIVTHAREKGILCQGRGSAANSVVCFCLGITGVNPTQVDLLFERFISAERKEPPDIDVDFEHERREEVMQYVYDRYSRDRAAIVATVISYRSRSAIRDVGKALGLSEDVTAALANTVWGLSGGGIDRQHIRQAGLDPDNPIIQRAVELAITLIGFPRHLSQHVGGFVLTRDRLDETVPIGPAAMDKRSFIEWDKDDIDEVGLMKVDVLSLGMLTCIRKAFDLIHQHKPQLYGGEKLTLASLPRKDKAVYDMLCKGDSLGVFQVESRAQMNMLPRLRPQEFYDLVIEVAIVRPGPIQGDMVHPYLRRRSGQEPCTLPSPSPQHGPANELQQILGKTKGVPLFQEQAMRIAMEAAKFTPEEANQLRRAMATFRKMGTIHTMEKKMIDGMVNRGYDRTFAENCFNQIKGFGEYGFPESHAASFAHLVYISAWLKCHHPEVFAAALLNSQPMGFYAPAQIVRDAREHGVTVLPVDVNFSQWDNILEETPDVHLALRLGFRQIDGFSKRDTELLIADRQEPYRTIEDMHRRLRLDRRAFTLLADADAFGSLDIDRRAALWAVRRLPNDETLLLFRAAAASELAQEPRTKLPEMAASEHVIADYETTRLSLKGHPLQYLREGLAAEGVSTCRAVQEGADGRRMKVAGVVTVRQRPGSAKGVVFLTIEDETGIANIVIWPKIMKVFRREVMSARLIHIEGRIQRSLEGVVHLVAAKLQDRSAALIEMSGREAQRLIAPSQMAHHPRNVRVMPNSRDFH.

The protein belongs to the DNA polymerase type-C family. DnaE2 subfamily.

The protein localises to the cytoplasm. The catalysed reaction is DNA(n) + a 2'-deoxyribonucleoside 5'-triphosphate = DNA(n+1) + diphosphate. In terms of biological role, DNA polymerase involved in damage-induced mutagenesis and translesion synthesis (TLS). It is not the major replicative DNA polymerase. The polypeptide is Error-prone DNA polymerase (Brucella melitensis biotype 1 (strain ATCC 23456 / CCUG 17765 / NCTC 10094 / 16M)).